The following is a 291-amino-acid chain: 4-diphosphocytidyl-2-C-methyl-D-erythritol kinase (291 aa).

Lysine 10 is a catalytic residue. 94-104 (PVSAGLAGGSS) contributes to the ATP binding site. Residue aspartate 136 is part of the active site.

It belongs to the GHMP kinase family. IspE subfamily.

It catalyses the reaction 4-CDP-2-C-methyl-D-erythritol + ATP = 4-CDP-2-C-methyl-D-erythritol 2-phosphate + ADP + H(+). Its pathway is isoprenoid biosynthesis; isopentenyl diphosphate biosynthesis via DXP pathway; isopentenyl diphosphate from 1-deoxy-D-xylulose 5-phosphate: step 3/6. Its function is as follows. Catalyzes the phosphorylation of the position 2 hydroxy group of 4-diphosphocytidyl-2C-methyl-D-erythritol. The polypeptide is 4-diphosphocytidyl-2-C-methyl-D-erythritol kinase (Listeria welshimeri serovar 6b (strain ATCC 35897 / DSM 20650 / CCUG 15529 / CIP 8149 / NCTC 11857 / SLCC 5334 / V8)).